Here is a 294-residue protein sequence, read N- to C-terminus: Nucleoside-specific channel-forming protein Tsx (294 aa).

The signal sequence occupies residues 1–22 (MKKTLLAAGAVVALSTTFAAGA).

Belongs to the nucleoside-specific channel-forming outer membrane porin (Tsx) (TC 1.B.10) family.

It localises to the cell outer membrane. Functionally, functions as a substrate-specific channel for nucleosides and deoxynucleosides. Also functions in albicidin uptake and as receptor for colicin K. Also is a receptor for several Tsx-specific bacteriophages. This Klebsiella pneumoniae protein is Nucleoside-specific channel-forming protein Tsx.